An 88-amino-acid chain; its full sequence is MSLLSFLLGEKKKTASVAKERLQIILAHERSGRSAGQPDYLPALQRELVAVISKYVKINADDLKVHFERQDDLEVLEVKIELPEATAK.

It belongs to the MinE family.

In terms of biological role, prevents the cell division inhibition by proteins MinC and MinD at internal division sites while permitting inhibition at polar sites. This ensures cell division at the proper site by restricting the formation of a division septum at the midpoint of the long axis of the cell. This is Cell division topological specificity factor from Acidovorax ebreus (strain TPSY) (Diaphorobacter sp. (strain TPSY)).